The sequence spans 420 residues: 3-isopropylmalate dehydratase large subunit (420 aa).

Residues cysteine 300, cysteine 360, and cysteine 363 each coordinate [4Fe-4S] cluster.

The protein belongs to the aconitase/IPM isomerase family. LeuC type 2 subfamily. In terms of assembly, heterodimer of LeuC and LeuD. The cofactor is [4Fe-4S] cluster.

The catalysed reaction is (2R,3S)-3-isopropylmalate = (2S)-2-isopropylmalate. It participates in amino-acid biosynthesis; L-leucine biosynthesis; L-leucine from 3-methyl-2-oxobutanoate: step 2/4. Its function is as follows. Catalyzes the isomerization between 2-isopropylmalate and 3-isopropylmalate, via the formation of 2-isopropylmaleate. The chain is 3-isopropylmalate dehydratase large subunit from Helicobacter hepaticus (strain ATCC 51449 / 3B1).